Consider the following 438-residue polypeptide: Lipid-A-disaccharide synthase (438 aa).

The protein belongs to the LpxB family.

It catalyses the reaction a lipid X + a UDP-2-N,3-O-bis[(3R)-3-hydroxyacyl]-alpha-D-glucosamine = a lipid A disaccharide + UDP + H(+). It participates in bacterial outer membrane biogenesis; LPS lipid A biosynthesis. Condensation of UDP-2,3-diacylglucosamine and 2,3-diacylglucosamine-1-phosphate to form lipid A disaccharide, a precursor of lipid A, a phosphorylated glycolipid that anchors the lipopolysaccharide to the outer membrane of the cell. In Xanthomonas campestris pv. campestris (strain 8004), this protein is Lipid-A-disaccharide synthase.